A 139-amino-acid polypeptide reads, in one-letter code: Proline-rich nuclear receptor coactivator 2 (139 aa).

Disordered stretches follow at residues 1-51 (MGGG…GYNS), 61-80 (NGGK…SLSG), and 89-110 (ANQN…LPKP). 2 stretches are compositionally biased toward polar residues: residues 11-36 (APQS…NSQM) and 61-79 (NGGK…SSLS). Positions 99–105 (SEPPSPS) match the SH3-binding motif. The segment covering 101–110 (PPSPSVLPKP) has biased composition (pro residues).

The protein belongs to the PNRC family. PNRC2 subfamily. As to quaternary structure, interacts with UPF1/RENT1; preferentially interacts with hyperphosphorylated form. Interacts with DCP1A. Interacts with many nuclear receptors including ESR1, ESRRA, ESRRG, NR3C1/GR, NR5A1, PGR, TR, RAR and RXR. Expressed in heart, lung, muscle and brain.

The protein resides in the nucleus. Its subcellular location is the cytoplasm. It localises to the P-body. Functionally, involved in nonsense-mediated mRNA decay (NMD) by acting as a bridge between the mRNA decapping complex and the NMD machinery. May act by targeting the NMD machinery to the P-body and recruiting the decapping machinery to aberrant mRNAs. Required for UPF1/RENT1 localization to the P-body. Plays a role in glucocorticoid receptor-mediated mRNA degradation by interacting with the glucocorticoid receptor NR3C1 in a ligand-dependent manner when it is bound to the 5' UTR of target mRNAs and recruiting the RNA helicase UPF1 and the mRNA-decapping enzyme DCP1A, leading to RNA decay. Also acts as a nuclear receptor coactivator. May play a role in controlling the energy balance between energy storage and energy expenditure. This chain is Proline-rich nuclear receptor coactivator 2 (PNRC2), found in Homo sapiens (Human).